A 544-amino-acid chain; its full sequence is Chaperonin GroEL (544 aa).

ATP-binding positions include T30–P33, D87–T91, G414, N478–L480, and D494.

The protein belongs to the chaperonin (HSP60) family. In terms of assembly, forms a cylinder of 14 subunits composed of two heptameric rings stacked back-to-back. Interacts with the co-chaperonin GroES.

It localises to the cytoplasm. It catalyses the reaction ATP + H2O + a folded polypeptide = ADP + phosphate + an unfolded polypeptide.. Together with its co-chaperonin GroES, plays an essential role in assisting protein folding. The GroEL-GroES system forms a nano-cage that allows encapsulation of the non-native substrate proteins and provides a physical environment optimized to promote and accelerate protein folding. This is Chaperonin GroEL from Pelotomaculum thermopropionicum (strain DSM 13744 / JCM 10971 / SI).